We begin with the raw amino-acid sequence, 781 residues long: Molybdenum cofactor sulfurase (781 aa).

At Lys246 the chain carries N6-(pyridoxal phosphate)lysine. Cys413 is an active-site residue. Residues 635-781 enclose the MOSC domain; sequence LRLLRQSGQR…MTCGDVVLVE (147 aa). Ser734 carries the phosphoserine modification.

Belongs to the class-V pyridoxal-phosphate-dependent aminotransferase family. MOCOS subfamily. The cofactor is pyridoxal 5'-phosphate.

The enzyme catalyses Mo-molybdopterin + L-cysteine + AH2 = thio-Mo-molybdopterin + L-alanine + A + H2O. It functions in the pathway cofactor biosynthesis; molybdopterin biosynthesis. In terms of biological role, sulfurates the molybdenum cofactor. Sulfation of molybdenum is essential for xanthine dehydrogenase (XDH) and aldehyde oxidase (ADO) enzymes in which molybdenum cofactor is liganded by 1 oxygen and 1 sulfur atom in active form. This is Molybdenum cofactor sulfurase from Drosophila melanogaster (Fruit fly).